The chain runs to 601 residues: Elongation factor 4 (601 aa).

The region spanning 5 to 188 is the tr-type G domain; that stretch reads SHIRNFAIIA…ALVLRLPPPT (184 aa). GTP contacts are provided by residues 17 to 22 and 135 to 138; these read DHGKST and NKID.

It belongs to the TRAFAC class translation factor GTPase superfamily. Classic translation factor GTPase family. LepA subfamily.

It is found in the cell inner membrane. The catalysed reaction is GTP + H2O = GDP + phosphate + H(+). Its function is as follows. Required for accurate and efficient protein synthesis under certain stress conditions. May act as a fidelity factor of the translation reaction, by catalyzing a one-codon backward translocation of tRNAs on improperly translocated ribosomes. Back-translocation proceeds from a post-translocation (POST) complex to a pre-translocation (PRE) complex, thus giving elongation factor G a second chance to translocate the tRNAs correctly. Binds to ribosomes in a GTP-dependent manner. This Rhodospirillum rubrum (strain ATCC 11170 / ATH 1.1.1 / DSM 467 / LMG 4362 / NCIMB 8255 / S1) protein is Elongation factor 4.